The sequence spans 349 residues: Isopentenyl-diphosphate delta-isomerase (349 aa).

Residue 9–10 coordinates substrate; it reads RK. Residues 65 to 67, Ser95, and Asn124 each bind FMN; that span reads AMT. A substrate-binding site is contributed by 95-97; the sequence is STH. Gln154 is a binding site for substrate. Residue Glu155 coordinates Mg(2+). FMN-binding positions include Lys186, Ser211, Thr216, 262–264, and 283–284; these read GVR and SR.

The protein belongs to the IPP isomerase type 2 family. As to quaternary structure, homooctamer. Dimer of tetramers. Requires FMN as cofactor. NADPH serves as cofactor. It depends on Mg(2+) as a cofactor.

It is found in the cytoplasm. It carries out the reaction isopentenyl diphosphate = dimethylallyl diphosphate. Involved in the biosynthesis of isoprenoids. Catalyzes the 1,3-allylic rearrangement of the homoallylic substrate isopentenyl (IPP) to its allylic isomer, dimethylallyl diphosphate (DMAPP). The chain is Isopentenyl-diphosphate delta-isomerase from Staphylococcus haemolyticus (strain JCSC1435).